Here is a 6874-residue protein sequence, read N- to C-terminus: Nesprin-2 (6874 aa).

Residues 1–286 (MAASPVLPTE…MTYVAQFLKY (286 aa)) are actin-binding. The Cytoplasmic portion of the chain corresponds to 1–6823 (MAASPVLPTE…RRSFLSRVIR (6823 aa)). Calponin-homology (CH) domains follow at residues 31–136 (DTQK…LHFH) and 183–288 (WSAK…KYSK). 4 Spectrin repeats span residues 299 to 380 (AKVR…HQVA), 381 to 474 (AWRA…RINN), 475 to 577 (VLGK…QYIH), and 578 to 680 (NTKA…IQDQ). Residues 299–6767 (AKVRDALVWL…PDASLTSFDE (6469 aa)) adopt a coiled-coil conformation. The disordered stretch occupies residues 675–723 (VKIQDQPPGNSSGTSLSKESAMAAEPGGSRGEDVKAAEKQEVEDEESAG). Residues 681–692 (PPGNSSGTSLSK) are compositionally biased toward polar residues. Over residues 704–714 (RGEDVKAAEKQ) the composition is skewed to basic and acidic residues. 31 Spectrin repeats span residues 727–834 (VNEE…KNLS), 835–928 (DEPL…LRHE), 929–1030 (ISLY…KCAS), 1120–1211 (TQRG…LLNT), 1262–1322 (DIRD…DALD), 1323–1409 (ALEG…QSKE), 1410–1514 (EGPP…ASVT), 1515–1626 (ESLE…KTEE), 1627–1728 (YGEN…AGGS), 1729–1820 (NSYA…TKKN), 1821–1928 (ALQD…AGEL), 1929–2026 (NNSF…EEED), 2027–2122 (KLPA…LANT), 2123–2233 (YLSH…SVQK), 2234–2350 (LEGH…LNSI), 2422–2503 (DERE…TLKK), 2504–2610 (TKER…KCFQ), 2611–2707 (QATE…EALE), 2708–2821 (PLNR…QLEL), 2822–2923 (KLEE…FLQN), 2924–3027 (NGSE…GKIK), 3028–3133 (QLDT…NMLL), 3134–3239 (ELQP…SLRA), 3240–3343 (DVLN…AQEA), 3344–3456 (EEER…QWGG), 3457–3563 (ELKR…TTRK), 3564–3669 (NKDL…SSEV), 3670–3767 (SKSS…ESRT), 3768–3870 (SQLN…QIME), 3871–3976 (ALPH…VTQE), and 3977–4074 (QNEL…KPSA). Residues 2338-2397 (SAKQETENGLNSILKSKSSTEKHVKFSLPVEEMPATSEVPKPTRESAAVGESGGARETNT) are disordered. A compositionally biased stretch (polar residues) spans 2344 to 2354 (ENGLNSILKSK). 4 disordered regions span residues 4062-4152 (KQEQ…ATIV), 4171-4193 (APDS…TDEG), 4326-4348 (FSED…DQPA), and 4401-4429 (HQEN…DSTL). The span at 4081-4091 (VAERDASERKL) shows a compositional bias: basic and acidic residues. S4096 bears the Phosphoserine mark. Over residues 4110-4122 (SSVKSEDGRRRTE) the composition is skewed to basic and acidic residues. One copy of the Spectrin 36 repeat lies at 4218–4337 (RSRPRPADIL…EDQHPSTLKK (120 aa)). A compositionally biased stretch (basic and acidic residues) spans 4326-4345 (FSEDQHPSTLKKPSEPHDVD). The span at 4409–4429 (RQSASSSKVPSPGNAASDSTL) shows a compositional bias: polar residues. Spectrin repeat units lie at residues 4507 to 4626 (SMTE…RSYQ), 4627 to 4714 (NEVK…RARY), 4715 to 4823 (LELS…QSML), 4824 to 4929 (QKWE…QTLL), 4930 to 5037 (KHLL…QEKL), 5038 to 5150 (HQLQ…KIQH), 5151 to 5252 (LEQL…SQVH), 5253 to 5377 (QLRA…KAPH), 5378 to 5473 (NAHA…MLLA), 5474 to 5576 (KSNE…YSEL), 5577 to 5691 (QGNG…QWRF), 5692 to 5786 (FTTS…LSLG), 5787 to 5894 (EVIS…RVAI), 5895 to 6004 (RKQE…VKKL), 6005 to 6122 (KETF…EETW), 6123 to 6230 (RLWQ…LRYF), and 6231 to 6342 (TNQR…PGLD). The tract at residues 5435–5459 (NSTLSDQLPQPEERSTPGLHSGQRH) is disordered. Phosphoserine is present on S5772. The disordered stretch occupies residues 6336 to 6473 (SHTPGLDDEK…TEAPVPTDAS (138 aa)). Residues 6341–6354 (LDDEKEASENETDI) are compositionally biased toward acidic residues. Phosphoserine is present on residues S6348, S6371, S6400, S6417, S6418, S6419, and S6448. The span at 6355-6372 (EDPREIQADSWRKRRESE) shows a compositional bias: basic and acidic residues. Spectrin repeat units follow at residues 6450–6534 (SHSK…KLRL), 6535–6650 (KQTV…QCQD), and 6651–6767 (FHQL…SFDE). Positions 6790–6812 (EEEEEEEETDSRMPHLDSPGSSQ) are disordered. The KASH domain occupies 6815 to 6874 (RSFLSRVIRAALPLQLLLLLLLLLACLLPASEDDYSCTQANNFARSFYPMLRYTNGPPPT). Residues 6824-6844 (AALPLQLLLLLLLLLACLLPA) form a helical; Anchor for type IV membrane protein membrane-spanning segment. The Perinuclear space portion of the chain corresponds to 6845–6874 (SEDDYSCTQANNFARSFYPMLRYTNGPPPT). The segment at 6861-6874 (FYPMLRYTNGPPPT) is sufficient for interaction with SUN2.

The protein belongs to the nesprin family. Core component of LINC complexes which are composed of inner nuclear membrane SUN domain-containing proteins coupled to outer nuclear membrane KASH domain-containing nesprins. SUN and KASH domain-containing proteins seem to bind each other promiscuously; however, some LINC complex constituents are tissue- or cell type-specific. At least SUN1/2-containing core LINC complexes are proposed to be hexameric composed of three protomers of each KASH and SUN domain-containing protein. The SUN2:SYNE2/KASH2 complex is a heterohexamer; the homotrimeric cloverleave-like conformation of the SUN domain is a prerequisite for LINC complex formation in which three separate SYNE2/KASH2 peptides bind at the interface of adjacent SUN domains. Interacts with EMD, LMNA, MKS3 and F-actin via its N-terminal domain. Interacts with DCTN1 and DYNC1I1/2; suggesting the association with the dynein-dynactin motor complex. Associates with kinesin motor complexes. Interacts with TMEM67. Interacts (via KASH domain) with TMEM258. Interacts with BROX; this interaction promotes SYN2 ubiquitination and facilitates the relaxation of mechanical stress imposed by compressive actin fibers at the rupture site. Post-translationally, the disulfid bond with SUN2 is required for stability of the SUN2:SYNE2/KASH2 LINC complex under tensile forces though not required for the interaction. C-terminal isoforms are highly expressed in the brain, hert and skeletal muscle. Isoform 1 (Nesprin-2 Giant) is most prevalent in the brain, skin, kidney and skeletal muscle.

It is found in the nucleus outer membrane. The protein resides in the sarcoplasmic reticulum membrane. The protein localises to the cell membrane. It localises to the cytoplasm. Its subcellular location is the cytoskeleton. It is found in the mitochondrion. The protein resides in the nucleus. The protein localises to the nucleoplasm. Functionally, multi-isomeric modular protein which forms a linking network between organelles and the actin cytoskeleton to maintain the subcellular spatial organization. As a component of the LINC (LInker of Nucleoskeleton and Cytoskeleton) complex involved in the connection between the nuclear lamina and the cytoskeleton. The nucleocytoplasmic interactions established by the LINC complex play an important role in the transmission of mechanical forces across the nuclear envelope and in nuclear movement and positioning. Specifically, SYNE2 and SUN2 assemble in arrays of transmembrane actin-associated nuclear (TAN) lines which are bound to F-actin cables and couple the nucleus to retrograde actin flow during actin-dependent nuclear movement. May be involved in nucleus-centrosome attachment. During interkinetic nuclear migration (INM) at G2 phase and nuclear migration in neural progenitors its LINC complex association with SUN1/2 and probable association with cytoplasmic dynein-dynactin motor complexes functions to pull the nucleus toward the centrosome; SYNE1 and SYNE2 seem to act redundantly in cerebellum, midbrain, brain stem, and other brain regions except cerebral cortex and hippocampus. During INM at G1 phase mediates respective LINC complex association with kinesin to push the nucleus away from the centrosome. Involved in nuclear migration in retinal photoreceptor progenitors. Required for centrosome migration to the apical cell surface during early ciliogenesis. The polypeptide is Nesprin-2 (Mus musculus (Mouse)).